Here is a 535-residue protein sequence, read N- to C-terminus: Phosphoenolpyruvate carboxykinase (ATP) (535 aa).

Substrate-binding residues include arginine 59, tyrosine 201, and lysine 207. ATP is bound by residues lysine 207, histidine 226, and 243 to 251 (GLSGTGKTT). Residues lysine 207 and histidine 226 each contribute to the Mn(2+) site. Position 264 (aspartate 264) interacts with Mn(2+). ATP contacts are provided by residues glutamate 292, arginine 328, 444 to 445 (RI), and threonine 450. A substrate-binding site is contributed by arginine 328.

It belongs to the phosphoenolpyruvate carboxykinase (ATP) family. It depends on Mn(2+) as a cofactor.

It is found in the cytoplasm. It carries out the reaction oxaloacetate + ATP = phosphoenolpyruvate + ADP + CO2. The protein operates within carbohydrate biosynthesis; gluconeogenesis. In terms of biological role, involved in the gluconeogenesis. Catalyzes the conversion of oxaloacetate (OAA) to phosphoenolpyruvate (PEP) through direct phosphoryl transfer between the nucleoside triphosphate and OAA. The sequence is that of Phosphoenolpyruvate carboxykinase (ATP) from Parabacteroides distasonis (strain ATCC 8503 / DSM 20701 / CIP 104284 / JCM 5825 / NCTC 11152).